We begin with the raw amino-acid sequence, 104 residues long: Large ribosomal subunit protein uL24 (104 aa).

The protein belongs to the universal ribosomal protein uL24 family. In terms of assembly, part of the 50S ribosomal subunit.

Its function is as follows. One of two assembly initiator proteins, it binds directly to the 5'-end of the 23S rRNA, where it nucleates assembly of the 50S subunit. Functionally, one of the proteins that surrounds the polypeptide exit tunnel on the outside of the subunit. The polypeptide is Large ribosomal subunit protein uL24 (Klebsiella pneumoniae (strain 342)).